The sequence spans 324 residues: Adenine deaminase (324 aa).

Residues His-8, His-10, and His-186 each coordinate Zn(2+). Glu-189 serves as the catalytic Proton donor. Zn(2+) is bound at residue Asp-267. A substrate-binding site is contributed by Asp-268.

The protein belongs to the metallo-dependent hydrolases superfamily. Adenosine and AMP deaminases family. Adenine deaminase type 2 subfamily. Zn(2+) serves as cofactor.

It carries out the reaction adenine + H2O + H(+) = hypoxanthine + NH4(+). Catalyzes the hydrolytic deamination of adenine to hypoxanthine. Plays an important role in the purine salvage pathway and in nitrogen catabolism. The polypeptide is Adenine deaminase (Mesorhizobium japonicum (strain LMG 29417 / CECT 9101 / MAFF 303099) (Mesorhizobium loti (strain MAFF 303099))).